Reading from the N-terminus, the 382-residue chain is MSLKEKTQSLFANAFGYPATHTIQAPGRVNLIGEHTDYNDGFVLPCAIDYQTVISCAPRDDRKVRVMAADYENQLDEFSLDAPIVAHENYQWANYVRGVVKHLQLRNNSFGGVDMVISGNVPQGAGLSSSASLEVAVGTVLQQLYHLPLDGAQIALNGQEAENQFVGCNCGIMDQLISALGKKDHALLIDCRSLGTKAVSMPKGVAVVIINSNFKRTLVGSEYNTRREQCETGARFFQQPALRDVTIEEFNAVAHELDPIVAKRVRHILTENARTVEAASALEQGDLKRMSELMAESHASMRDDFEITVPQIDTLVEIVKAVIGDKGGVRMTGGGFGGCIVALIPEELVPAVQQAVAEQYEAKTGIKETFYVCKPSQGAGQC.

34–37 (EHTD) contacts substrate. Residue 124 to 130 (GAGLSSS) coordinates ATP. Residues Ser130 and Glu162 each contribute to the Mg(2+) site. Catalysis depends on Asp174, which acts as the Proton acceptor. Tyr223 contributes to the substrate binding site.

It belongs to the GHMP kinase family. GalK subfamily.

Its subcellular location is the cytoplasm. The enzyme catalyses alpha-D-galactose + ATP = alpha-D-galactose 1-phosphate + ADP + H(+). The protein operates within carbohydrate metabolism; galactose metabolism. In terms of biological role, catalyzes the transfer of the gamma-phosphate of ATP to D-galactose to form alpha-D-galactose-1-phosphate (Gal-1-P). The polypeptide is Galactokinase (Escherichia coli O9:H4 (strain HS)).